The chain runs to 489 residues: Homoserine O-acetyltransferase (489 aa).

The AB hydrolase-1 domain maps to 69-438 (LLLCHALSGS…AEGHDGFLLE (370 aa)). Ser163 functions as the Nucleophile in the catalytic mechanism. The tract at residues 255–329 (ASRHPYPDRL…QTTDSSSLNQ (75 aa)) is disordered. Basic and acidic residues predominate over residues 280-290 (EGNRNRRERPC). Over residues 299–329 (SESALNSPASSVSSLPSLGASQTTDSSSLNQ) the composition is skewed to low complexity. Catalysis depends on residues Asp403 and His432.

Belongs to the AB hydrolase superfamily. MetX family.

The protein localises to the cytoplasm. The enzyme catalyses L-homoserine + acetyl-CoA = O-acetyl-L-homoserine + CoA. Its pathway is amino-acid biosynthesis; L-methionine biosynthesis via de novo pathway; O-acetyl-L-homoserine from L-homoserine: step 1/1. Its function is as follows. Commits homoserine to the methionine biosynthesis pathway by catalyzing its O-acetylation. This chain is Homoserine O-acetyltransferase (met6), found in Schizosaccharomyces pombe (strain 972 / ATCC 24843) (Fission yeast).